Reading from the N-terminus, the 726-residue chain is DNA-directed RNA polymerase subunit beta N-terminal section (726 aa).

The protein belongs to the RNA polymerase beta chain family. As to quaternary structure, in plastids the minimal PEP RNA polymerase catalytic core is composed of four subunits: alpha, beta, beta', and beta''. When a (nuclear-encoded) sigma factor is associated with the core the holoenzyme is formed, which can initiate transcription.

The protein resides in the plastid. Its subcellular location is the chloroplast. It catalyses the reaction RNA(n) + a ribonucleoside 5'-triphosphate = RNA(n+1) + diphosphate. In terms of biological role, DNA-dependent RNA polymerase catalyzes the transcription of DNA into RNA using the four ribonucleoside triphosphates as substrates. This chain is DNA-directed RNA polymerase subunit beta N-terminal section (rpoB1), found in Tetradesmus obliquus (Green alga).